Consider the following 517-residue polypeptide: L-amino-acid oxidase (517 aa).

Residues 1–18 (MNVFFMFSLLFLAALGSC) form the signal peptide. Cys29 and Cys192 are joined by a disulfide. Residues 62–63 (MA), 82–83 (EA), Arg90, and 106–109 (GPMR) contribute to the FAD site. Arg109 serves as a coordination point for substrate. Asn191 is a glycosylation site (N-linked (GlcNAc...) asparagine). Val280 is an FAD binding site. Cys350 and Cys431 are disulfide-bonded. Tyr391 contributes to the substrate binding site. FAD contacts are provided by residues Glu476 and 483–488 (GWLDST). Position 483-484 (483-484 (GW)) interacts with substrate.

It belongs to the flavin monoamine oxidase family. FIG1 subfamily. As to quaternary structure, homodimer; non-covalently linked. It depends on FAD as a cofactor. In terms of processing, N-glycosylated. As to expression, expressed by the venom gland.

The protein localises to the secreted. It catalyses the reaction an L-alpha-amino acid + O2 + H2O = a 2-oxocarboxylate + H2O2 + NH4(+). Catalyzes an oxidative deamination of predominantly hydrophobic and aromatic L-amino acids, thus producing hydrogen peroxide that may contribute to the diverse toxic effects of this enzyme. Exhibits diverse biological activities, such as hemorrhage, hemolysis, edema, apoptosis of vascular endothelial cells or tumor cell lines, antiparasitic activities, as well as regulation of platelet aggregation. Effects of snake L-amino oxidases on platelets are controversial, since they either induce aggregation or inhibit agonist-induced aggregation. These different effects are probably due to different experimental conditions. This protein has antibacterial activities. In Pseudechis australis (Mulga snake), this protein is L-amino-acid oxidase.